Reading from the N-terminus, the 73-residue chain is Venom protein 55.1 (73 aa).

A signal peptide spans 1–19; sequence MNFLCILFVVSLISSLSKC. P57 is subject to Proline amide. Residues 61–73 constitute a propeptide that is removed on maturation; that stretch reads RRSFDLYALVNAK.

This sequence belongs to the diuretic hormone class 2 family. As to expression, expressed by the venom gland.

The protein localises to the secreted. In terms of biological role, regulates fluid secretion. The chain is Venom protein 55.1 from Lychas mucronatus (Chinese swimming scorpion).